Reading from the N-terminus, the 268-residue chain is Interleukin-1 beta (268 aa).

A propeptide spanning residues 1 to 116 (MATVPELNCE…WDDDDLLVCD (116 aa)) is cleaved from the precursor.

The protein belongs to the IL-1 family. Monomer. In its precursor form, weakly interacts with full-length MEFV; the mature cytokine does not interact at all. Interacts with integrins ITGAV:ITGBV and ITGA5:ITGB1; integrin-binding is required for IL1B signaling. Interacts with cargo receptor TMED10; the interaction is direct and is required for the secretion of IL1B mature form. Interacts with HSP90AB1; the interaction facilitates cargo translocation into the ERGIC. Interacts with HSP90B1; the interaction facilitates cargo translocation into the ERGIC.

It is found in the cytoplasm. The protein resides in the cytosol. Its subcellular location is the secreted. It localises to the lysosome. The protein localises to the extracellular exosome. Potent pro-inflammatory cytokine. Initially discovered as the major endogenous pyrogen, induces prostaglandin synthesis, neutrophil influx and activation, T-cell activation and cytokine production, B-cell activation and antibody production, and fibroblast proliferation and collagen production. Promotes Th17 differentiation of T-cells. Synergizes with IL12/interleukin-12 to induce IFNG synthesis from T-helper 1 (Th1) cells. Plays a role in angiogenesis by inducing VEGF production synergistically with TNF and IL6. Involved in transduction of inflammation downstream of pyroptosis: its mature form is specifically released in the extracellular milieu by passing through the gasdermin-D (GSDMD) pore. The chain is Interleukin-1 beta from Rattus norvegicus (Rat).